The sequence spans 147 residues: Small ribosomal subunit protein eS19 (147 aa).

This sequence belongs to the eukaryotic ribosomal protein eS19 family. In terms of assembly, part of the 30S ribosomal subunit.

In terms of biological role, may be involved in maturation of the 30S ribosomal subunit. This is Small ribosomal subunit protein eS19 from Archaeoglobus fulgidus (strain ATCC 49558 / DSM 4304 / JCM 9628 / NBRC 100126 / VC-16).